We begin with the raw amino-acid sequence, 301 residues long: Uricase-2 isozyme 2 (301 aa).

Active-site charge relay system residues include Lys-17 and Thr-63. Urate contacts are provided by Thr-63, Asp-64, Phe-165, Arg-182, Val-237, Gln-238, and Asn-257. His-259 (charge relay system) is an active-site residue. Residues 299–301 (SKL) carry the Microbody targeting signal motif.

This sequence belongs to the uricase family.

Its subcellular location is the peroxisome. It carries out the reaction urate + O2 + H2O = 5-hydroxyisourate + H2O2. It participates in purine metabolism; urate degradation; (S)-allantoin from urate: step 1/3. Catalyzes the oxidation of uric acid to 5-hydroxyisourate, which is further processed to form (S)-allantoin. The polypeptide is Uricase-2 isozyme 2 (Canavalia lineata (Beach bean)).